The following is a 1944-amino-acid chain: Anaphase-promoting complex subunit 1 (1944 aa).

S51, S60, S202, and S286 each carry phosphoserine. T291 carries the phosphothreonine modification. The tract at residues 305-343 (LRSLSKGDSPVTSPFQNYSSIHSQSRSTSSPSLHSRSPS) is disordered. 7 positions are modified to phosphoserine: S313, S341, S343, S355, S362, S373, and S377. A compositionally biased stretch (low complexity) spans 323 to 343 (SSIHSQSRSTSSPSLHSRSPS). Residues 373–396 (SHNQSPKRHSISHSPNSNSNGSFL) form a disordered region. A compositionally biased stretch (low complexity) spans 384–394 (SHSPNSNSNGS). Residue T537 is modified to Phosphothreonine. 2 positions are modified to phosphoserine: S547 and S555. Y571 is subject to Phosphotyrosine. Phosphoserine is present on residues S686, S688, and S916. Residues 994–1016 (KGKSVLSSDVPSGTETEEEDDGM) are disordered. A compositionally biased stretch (polar residues) spans 998-1007 (VLSSDVPSGT). PC repeat units lie at residues 1297-1325 (AAGLALGMVCLGHGSNLIGMSDLNVPEQL), 1366-1404 (GATLALAMIYLKTNNRSIADWLRAPDTMYLLDFVKPEFL), 1467-1501 (GACLSLGFRFAGSENLSAFNCLHKFAKDFMTYLSA), and 1520-1552 (LLSLAMVMAGSGNLKVLQLCRFLHMKTGGEMNY).

Belongs to the APC1 family. In terms of assembly, the mammalian APC/C is composed at least of 14 distinct subunits ANAPC1, ANAPC2, CDC27/APC3, ANAPC4, ANAPC5, CDC16/APC6, ANAPC7, CDC23/APC8, ANAPC10, ANAPC11, CDC26/APC12, ANAPC13, ANAPC15 and ANAPC16 that assemble into a complex of at least 19 chains with a combined molecular mass of around 1.2 MDa; APC/C interacts with FZR1 and FBXO5. Post-translationally, phosphorylated. Phosphorylation on Ser-355 occurs specifically during mitosis.

The protein operates within protein modification; protein ubiquitination. Functionally, component of the anaphase promoting complex/cyclosome (APC/C), a cell cycle-regulated E3 ubiquitin ligase that controls progression through mitosis and the G1 phase of the cell cycle. The APC/C complex acts by mediating ubiquitination and subsequent degradation of target proteins: it mainly mediates the formation of 'Lys-11'-linked polyubiquitin chains and, to a lower extent, the formation of 'Lys-48'- and 'Lys-63'-linked polyubiquitin chains. The APC/C complex catalyzes assembly of branched 'Lys-11'-/'Lys-48'-linked branched ubiquitin chains on target proteins. In Homo sapiens (Human), this protein is Anaphase-promoting complex subunit 1 (ANAPC1).